A 277-amino-acid polypeptide reads, in one-letter code: MASAELDYTIEIPDQPCWSQKNSPSPGGKEAETRQPVVILLGWGGCKDKNLAKYSAIYHKRGCIVIRYTAPWHMVFFSESLGIPSLRVLAQKLLELLFDYEIEKEPLLFHVFSNGGVMLYRYVLELLQTRRFCRLRVVGTIFDSAPGDSNLVGALRALAAILERRAAMLRLLLLVAFALVVVLFHVLLAPITALFHTHFYDRLQDAGSRWPELYLYSRADEVVLARDIERMVEARLARRVLARSVDFVSSAHVSHLRDYPTYYTSLCVDFMRNCVRC.

Residues 171–191 (LLLLVAFALVVVLFHVLLAPI) form a helical membrane-spanning segment.

Belongs to the TMEM53 family. As to expression, widely expressed.

The protein resides in the nucleus outer membrane. Its function is as follows. Ensures normal bone formation, through the negative regulation of bone morphogenetic protein (BMP) signaling in osteoblast lineage cells by blocking cytoplasm-nucleus translocation of phosphorylated SMAD1/5/9 proteins. This Homo sapiens (Human) protein is Transmembrane protein 53 (TMEM53).